A 610-amino-acid chain; its full sequence is T-cell immunomodulatory protein (610 aa).

Residues Met1–Ala32 form the signal peptide. N-linked (GlcNAc...) asparagine glycosylation is found at Asn35, Asn123, Asn138, Asn145, Asn150, Asn175, and Asn241. One copy of the FG-GAP 1; atypical repeat lies at Leu98–Trp135. An FG-GAP 2; atypical repeat occupies Phe153–Leu183. One copy of the FG-GAP 3; atypical repeat lies at Val256–Met291. N-linked (GlcNAc...) asparagine glycans are attached at residues Asn351, Asn369, and Asn480. Residues Val565–Ile585 form a helical membrane-spanning segment.

It belongs to the TIP family. As to quaternary structure, interacts with RUVBL1, RUVBL2 and alpha-tubulin.

It localises to the secreted. It is found in the membrane. Modulator of T-cell function. Has a protective effect in graft versus host disease model. The protein is T-cell immunomodulatory protein of Mus musculus (Mouse).